The primary structure comprises 32 residues: Cyclotide glopa A (32 aa).

Positions 1-32 (GGSIPCIETCVWTGCFLVPGCSCKSDKKCYLN) form a cross-link, cyclopeptide (Gly-Asn). Intrachain disulfides connect Cys6–Cys21, Cys10–Cys23, and Cys15–Cys29.

Post-translationally, this is a cyclic peptide.

Functionally, probably participates in a plant defense mechanism. The polypeptide is Cyclotide glopa A (Gloeospermum pauciflorum).